Reading from the N-terminus, the 477-residue chain is Cysteine--tRNA ligase (477 aa).

A Zn(2+)-binding site is contributed by C29. Positions P31 to N41 match the 'HIGH' region motif. 3 residues coordinate Zn(2+): C209, H234, and E238. A 'KMSKS' region motif is present at residues K267–S271. K270 contacts ATP.

The protein belongs to the class-I aminoacyl-tRNA synthetase family. Monomer. Zn(2+) is required as a cofactor.

The protein resides in the cytoplasm. It carries out the reaction tRNA(Cys) + L-cysteine + ATP = L-cysteinyl-tRNA(Cys) + AMP + diphosphate. The protein is Cysteine--tRNA ligase of Desulfitobacterium hafniense (strain DSM 10664 / DCB-2).